The chain runs to 177 residues: Transcriptional repressor NrdR (177 aa).

Residues 3–34 fold into a zinc finger; the sequence is CLFCQHTDTRVIDSRVSEDGATIRRRRECEAC. Positions 49–139 constitute an ATP-cone domain; the sequence is PVIIKKDGGR…VYRSFQDVAD (91 aa).

The protein belongs to the NrdR family. Zn(2+) is required as a cofactor.

Negatively regulates transcription of bacterial ribonucleotide reductase nrd genes and operons by binding to NrdR-boxes. In Xylella fastidiosa (strain M23), this protein is Transcriptional repressor NrdR.